A 123-amino-acid polypeptide reads, in one-letter code: Large ribosomal subunit protein uL14 (123 aa).

This sequence belongs to the universal ribosomal protein uL14 family. In terms of assembly, part of the 50S ribosomal subunit. Forms a cluster with proteins L3 and L19. In the 70S ribosome, L14 and L19 interact and together make contacts with the 16S rRNA in bridges B5 and B8.

Functionally, binds to 23S rRNA. Forms part of two intersubunit bridges in the 70S ribosome. This Blochmanniella floridana protein is Large ribosomal subunit protein uL14.